Here is a 130-residue protein sequence, read N- to C-terminus: Ribosome-binding factor A (130 aa).

This sequence belongs to the RbfA family. As to quaternary structure, monomer. Binds 30S ribosomal subunits, but not 50S ribosomal subunits or 70S ribosomes.

It is found in the cytoplasm. In terms of biological role, one of several proteins that assist in the late maturation steps of the functional core of the 30S ribosomal subunit. Associates with free 30S ribosomal subunits (but not with 30S subunits that are part of 70S ribosomes or polysomes). Required for efficient processing of 16S rRNA. May interact with the 5'-terminal helix region of 16S rRNA. In Methylibium petroleiphilum (strain ATCC BAA-1232 / LMG 22953 / PM1), this protein is Ribosome-binding factor A.